Here is an 842-residue protein sequence, read N- to C-terminus: uncharacterized protein (842 aa).

Disordered regions lie at residues 1-20 (MLHF…SPKE) and 142-209 (NSSS…TSSS). Positions 35–422 (TKDVTFRLVL…TAKSFHKCIL (388 aa)) constitute a uDENN FNIP1/2-type domain. Residues 183–209 (ANLSSSSKNMKDSTLSSQKARSNTSSS) are compositionally biased toward polar residues. A cDENN FNIP1/2-type domain is found at 430–772 (APLIKPSVFS…CYEIHEFPSE (343 aa)). Phosphoserine occurs at positions 573 and 590. The region spanning 777 to 842 (YAPFLLKEHH…KEVLRVCSHC (66 aa)) is the dDENN FNIP1/2-type domain.

Its subcellular location is the cytoplasm. This is an uncharacterized protein from Schizosaccharomyces pombe (strain 972 / ATCC 24843) (Fission yeast).